We begin with the raw amino-acid sequence, 2481 residues long: Tetratricopeptide repeat protein 28 (2481 aa).

N-acetylmethionine is present on Met1. Over residues 1-14 (MEQSPPPAPEPTQG) the composition is skewed to pro residues. Residues 1–48 (MEQSPPPAPEPTQGPTPARSRRRREPESPPASAPIPLFGADTIGQRSP) form a disordered region. Residue Ser28 is modified to Phosphoserine. TPR repeat units lie at residues 58–91 (FVEK…DPQN), 93–125 (ILYS…NPKW), 126–159 (PKAY…DPKS), 196–229 (FVVV…GTCS), 234–267 (GSVF…AKTL), 274–307 (CRAH…AMKL), 314–347 (SSAL…AKQS), 354–387 (AREL…AKDL), 394–427 (ARAY…AQEL), 434–467 (MRAY…AEDL), 474–507 (GRAS…AQEL), 514–547 (GRAY…SMEV), 554–587 (ASTH…AREL), 594–627 (ARAL…APDL), 634–667 (GKVC…AKDL), 674–707 (AKAY…AQSL), 714–747 (FRAL…AHQV), 754–787 (ASAY…YQEL), 794–827 (CRAH…GQKL), 834–867 (AQVY…LQQL), 877–910 (GRAY…AQSL), 917–950 (AKAY…AHEL), 957–990 (AQAY…ARDM), 997–1030 (SDAA…AEET), 1037–1070 (GRAY…AAQM), 1077–1110 (TVSY…AEQL), 1117–1150 (AKIR…FETI), and 1169–1202 (TSSY…AFAD). Ser1590 is subject to Phosphoserine. 3 disordered regions span residues 2004-2055 (FVSK…DEEE), 2075-2161 (NTCF…DPQE), and 2176-2339 (AVER…PADA). 2 stretches are compositionally biased toward polar residues: residues 2029-2043 (AYLQ…QLPP) and 2096-2122 (SVSS…NSPF). Position 2104 is a phosphoserine (Ser2104). Residues 2130 to 2146 (SSDTGESDQSSTETDST) are compositionally biased toward low complexity. Residues 2149 to 2159 (SQEESNPKLDP) are compositionally biased toward basic and acidic residues. The span at 2183-2214 (SGGQVSKSNNPEDGVQAPSSTAVFRASETSAF) shows a compositional bias: polar residues. Ser2224 and Ser2251 each carry phosphoserine. Residues 2238–2282 (RSSSLPKVSSGYSSPTTSEMSIKDSPSQHSGRPSPGCDSQTSQLD) are compositionally biased toward polar residues. Over residues 2307–2339 (SPSSGHQSPAGSAPSPALSYSSAGSARSSPADA) the composition is skewed to low complexity. Phosphoserine occurs at positions 2393 and 2398. The interval 2420 to 2467 (QHDGAPPKAPPNGHWRTETTSLGSLPLPAGPPATAPARPLRLPSGNGY) is disordered.

As to quaternary structure, interacts with AURKB. As to expression, widely expressed in fetal tissues. In adult tissues, expressed in testis and ovary and, at much lower levels, in kidney and pancreas.

It localises to the cytoplasm. The protein localises to the cytoskeleton. The protein resides in the microtubule organizing center. Its subcellular location is the centrosome. It is found in the spindle. It localises to the spindle pole. The protein localises to the midbody. In terms of biological role, during mitosis, may be involved in the condensation of spindle midzone microtubules, leading to the formation of midbody. In Homo sapiens (Human), this protein is Tetratricopeptide repeat protein 28 (TTC28).